The primary structure comprises 70 residues: MEVNTYLNAIILVLVVTIIAVISTSLVRTEPCVIKITGESITVLACKLDAETIKAIADLKPLSVERLSFH.

The Lumenal portion of the chain corresponds to 1–4 (MEVN). A helical membrane pass occupies residues 5-27 (TYLNAIILVLVVTIIAVISTSLV). Over 28-70 (RTEPCVIKITGESITVLACKLDAETIKAIADLKPLSVERLSFH) the chain is Cytoplasmic.

The protein belongs to the Tymovirales TGBp3 protein family.

It is found in the host endoplasmic reticulum membrane. Its function is as follows. Plays a role in viral cell-to-cell propagation, by facilitating genome transport to neighboring plant cells through plasmosdesmata. May induce the formation of granular vesicles derived from the endoplasmic reticulum, which align on actin filaments. The polypeptide is Movement protein TGBp3 (Brassica campestris (Field mustard)).